The primary structure comprises 508 residues: Argininosuccinate lyase (508 aa).

The protein belongs to the lyase 1 family. Argininosuccinate lyase subfamily.

It is found in the cytoplasm. It catalyses the reaction 2-(N(omega)-L-arginino)succinate = fumarate + L-arginine. The protein operates within amino-acid biosynthesis; L-arginine biosynthesis; L-arginine from L-ornithine and carbamoyl phosphate: step 3/3. This chain is Argininosuccinate lyase, found in Methanopyrus kandleri (strain AV19 / DSM 6324 / JCM 9639 / NBRC 100938).